The primary structure comprises 366 residues: Chorismate synthase (366 aa).

The NADP(+) site is built by Arg-48 and Arg-54. FMN is bound by residues 125-127, 238-239, Gly-278, 293-297, and Arg-319; these read RSS, NA, and KPTSS.

It belongs to the chorismate synthase family. In terms of assembly, homotetramer. The cofactor is FMNH2.

It carries out the reaction 5-O-(1-carboxyvinyl)-3-phosphoshikimate = chorismate + phosphate. It participates in metabolic intermediate biosynthesis; chorismate biosynthesis; chorismate from D-erythrose 4-phosphate and phosphoenolpyruvate: step 7/7. In terms of biological role, catalyzes the anti-1,4-elimination of the C-3 phosphate and the C-6 proR hydrogen from 5-enolpyruvylshikimate-3-phosphate (EPSP) to yield chorismate, which is the branch point compound that serves as the starting substrate for the three terminal pathways of aromatic amino acid biosynthesis. This reaction introduces a second double bond into the aromatic ring system. The sequence is that of Chorismate synthase from Burkholderia multivorans (strain ATCC 17616 / 249).